The primary structure comprises 150 residues: Nucleoside diphosphate kinase (150 aa).

ATP contacts are provided by Lys9, Phe57, Arg85, Thr91, Arg102, and Asn112. The Pros-phosphohistidine intermediate role is filled by His115.

Belongs to the NDK family. Homotetramer. Mg(2+) is required as a cofactor.

Its subcellular location is the cytoplasm. It carries out the reaction a 2'-deoxyribonucleoside 5'-diphosphate + ATP = a 2'-deoxyribonucleoside 5'-triphosphate + ADP. It catalyses the reaction a ribonucleoside 5'-diphosphate + ATP = a ribonucleoside 5'-triphosphate + ADP. Major role in the synthesis of nucleoside triphosphates other than ATP. The ATP gamma phosphate is transferred to the NDP beta phosphate via a ping-pong mechanism, using a phosphorylated active-site intermediate. This Thermosynechococcus vestitus (strain NIES-2133 / IAM M-273 / BP-1) protein is Nucleoside diphosphate kinase.